Consider the following 313-residue polypeptide: Biotin synthase (313 aa).

In terms of domain architecture, Radical SAM core spans 38 to 262; it reads REVQISTLLS…TMPHARVRLS (225 aa). Positions 53, 57, and 60 each coordinate [4Fe-4S] cluster. Residues Cys97, Cys128, Cys188, and Arg260 each contribute to the [2Fe-2S] cluster site.

Belongs to the radical SAM superfamily. Biotin synthase family. In terms of assembly, homodimer. The cofactor is [4Fe-4S] cluster. [2Fe-2S] cluster serves as cofactor.

The enzyme catalyses (4R,5S)-dethiobiotin + (sulfur carrier)-SH + 2 reduced [2Fe-2S]-[ferredoxin] + 2 S-adenosyl-L-methionine = (sulfur carrier)-H + biotin + 2 5'-deoxyadenosine + 2 L-methionine + 2 oxidized [2Fe-2S]-[ferredoxin]. It functions in the pathway cofactor biosynthesis; biotin biosynthesis; biotin from 7,8-diaminononanoate: step 2/2. In terms of biological role, catalyzes the conversion of dethiobiotin (DTB) to biotin by the insertion of a sulfur atom into dethiobiotin via a radical-based mechanism. This chain is Biotin synthase, found in Granulibacter bethesdensis (strain ATCC BAA-1260 / CGDNIH1).